The primary structure comprises 186 residues: UPF0340 protein SZO_02480 (186 aa).

The protein belongs to the UPF0340 family.

This chain is UPF0340 protein SZO_02480, found in Streptococcus equi subsp. zooepidemicus (strain H70).